Reading from the N-terminus, the 657-residue chain is MAAAVVTKTAWKLQEIVAHSSNVSSLVLGKSTGRLLATGGDDCRVNVWSVNKPNCVMSLTGHTTPIESLQISAKEELIVAGSQSGSIRVWDLEAAKILRTLLGHKANICSLDFHPYGSFVASGSLDTDIKLWDVRRKGCIFKYKSHTQAVRCLRFSPDGKWLASAADDHTVKLWDLTAGKVMFEFTGHSGPVNVVEFHPSEYLLASGSSDRTIRFWDLEKFHVVSCIEEEATPVRCILFNPDGCCLYGGFQDSLRVYGWEPERCFDVVVVNWGKVADLSVCHNQLIGVSFAQSTVSSFVVDLSRVTKSGSVPHGLLRNNELLAQPTPTGSSLRRSYDRPSTSCSKPQRVKHSSESERRSPSSEEDRDEKESKAEIQNPEDYKEIFQPRNAISRTPPHINEPFPAPPEDEPITAKEAVKPNQPVEVQTPLPKQELPETFQRPPIASSTPMPRAEPSVIPAARNEPIGLKASDFLPALKNQSQAELTDEEIMSQIRKGHKTVCMVLTSRHKNLDTVRAVWSTSDMKNSVDAAVATNDLSVVVDLLNIVNQTASLWKLDLCTVVLPQIEKLLQSKYESYVQTGCTSLKLILQRFLPLITDILAAPPSVGVDITREERLHKCRLCYKQLKNISNIVKNKSGLSGRHGSAFRELHLLMAVLE.

WD repeat units lie at residues 18–58, 61–100, 103–142, 145–184, 187–226, and 229–269; these read AHSS…CVMS, GHTTPIESLQISAKEELIVAGSQSGSIRVWDLEAAKILRT, GHKANICSLDFHPYGSFVASGSLDTDIKLWDVRRKGCIFK, SHTQAVRCLRFSPDGKWLASAADDHTVKLWDLTAGKVMFE, GHSGPVNVVEFHPSEYLLASGSSDRTIRFWDLEKFHVVSC, and EEAT…DVVV. Disordered regions lie at residues 318–410 and 423–454; these read NNEL…EDEP and VEVQTPLPKQELPETFQRPPIASSTPMPRAEP. Positions 325 to 345 are enriched in polar residues; it reads PTPTGSSLRRSYDRPSTSCSK. Residues 351–385 are compositionally biased toward basic and acidic residues; sequence HSSESERRSPSSEEDRDEKESKAEIQNPEDYKEIF.

This sequence belongs to the WD repeat KATNB1 family. As to quaternary structure, interacts with KATNA1. This interaction enhances the microtubule binding and severing activity of KATNA1 and also targets this activity to the centrosome.

The protein localises to the cytoplasm. It is found in the cytoskeleton. Its subcellular location is the microtubule organizing center. The protein resides in the centrosome. It localises to the spindle pole. The protein localises to the spindle. Its function is as follows. Participates in a complex which severs microtubules in an ATP-dependent manner. May act to target the enzymatic subunit of this complex to sites of action such as the centrosome. Microtubule severing may promote rapid reorganization of cellular microtubule arrays and the release of microtubules from the centrosome following nucleation. This is Katanin p80 WD40 repeat-containing subunit B1 from Gallus gallus (Chicken).